The sequence spans 83 residues: Heterin-1 (83 aa).

The N-terminal stretch at 1-22 (MNGKLLLVSLMVTMLVMQPAEA) is a signal peptide. A propeptide spanning residues 66-83 (VAGQIPFDEFMDILHYRP) is cleaved from the precursor.

This sequence belongs to the non-disulfide-bridged peptide (NDBP) superfamily. Long chain multifunctional peptide (group 2) family. Expressed by the venom gland.

It localises to the secreted. The protein resides in the target cell membrane. In terms of biological role, amphipathic peptide with potent activities against both Gram-positive and Gram-negative bacteria. Is the most active against the two Gram-positive Bacillus megaterium and Micrococcus luteus (MIC=4.0 uM for both). It has relatively low hemolytic activity against human erythrocytes. The protein is Heterin-1 of Heterometrus spinifer (Asia giant forest scorpion).